A 459-amino-acid polypeptide reads, in one-letter code: Phosphoglucosamine mutase (459 aa).

Ser-106 functions as the Phosphoserine intermediate in the catalytic mechanism. Mg(2+) contacts are provided by Ser-106, Asp-247, Asp-249, and Asp-251. Ser-106 bears the Phosphoserine mark.

This sequence belongs to the phosphohexose mutase family. Requires Mg(2+) as cofactor. In terms of processing, activated by phosphorylation.

It catalyses the reaction alpha-D-glucosamine 1-phosphate = D-glucosamine 6-phosphate. Its function is as follows. Catalyzes the conversion of glucosamine-6-phosphate to glucosamine-1-phosphate. This Chlamydia muridarum (strain MoPn / Nigg) protein is Phosphoglucosamine mutase.